The primary structure comprises 164 residues: Transcriptional regulator MraZ (164 aa).

2 consecutive SpoVT-AbrB domains span residues 7–60 (HYTN…EIDG) and 83–126 (SEIL…EPGR). Residues 144–164 (QLSARHAAPDAPPLRSHGARE) form a disordered region.

Belongs to the MraZ family. As to quaternary structure, forms oligomers.

Its subcellular location is the cytoplasm. It is found in the nucleoid. This chain is Transcriptional regulator MraZ, found in Methylocella silvestris (strain DSM 15510 / CIP 108128 / LMG 27833 / NCIMB 13906 / BL2).